Reading from the N-terminus, the 355-residue chain is Syntaxin-5 (355 aa).

Residues 1 to 333 (MIPRKRYGSK…KYFQSVTSNR (333 aa)) are Cytoplasmic-facing. Polar residues predominate over residues 28–37 (PATAGSSSSD). The disordered stretch occupies residues 28–51 (PATAGSSSSDIAPLPPPVTLVPPP). Positions 40-51 (PLPPPVTLVPPP) are enriched in pro residues. Residues 245–247 (IDM) carry the IxM motif; signal for cargo packaging into COPII-coated vesicles motif. Positions 263-325 (DSYIQSRADT…EAAHSEILKY (63 aa)) constitute a t-SNARE coiled-coil homology domain. Residues 287-318 (FQQLAHMVKEQEETIQRIDENVLGAQLDVEAA) adopt a coiled-coil conformation. The helical; Anchor for type IV membrane protein transmembrane segment at 334 to 354 (WLMVKIFLILIVFFIIFVVFL) threads the bilayer. A topological domain (vesicular) is located at residue Ala-355.

Belongs to the syntaxin family. In terms of assembly, part of a ternary complex containing STX5A, NSFL1C and VCP. Identified in a unique SNARE complex composed of the Golgi SNAREs GOSR1, GOSR2, YKT6 and VTI1A. Component of a SNARE complex consisting of STX5, YKT6, GOSR1 and BET1L. Interacts with BET1L. Interacts with BET1. Interacts with COG4. Interacts with GM130/GOLGA2. Interacts (via IxM motif) with SEC24C and SEC24D; mediates STX5 packaging into COPII-coated vesicles. Interacts with VLDLR; this interaction mediates VLDLR translocation from the endoplasmic reticulum to the plasma membrane.

Its subcellular location is the endoplasmic reticulum-Golgi intermediate compartment membrane. It localises to the golgi apparatus membrane. Functionally, mediates endoplasmic reticulum to Golgi transport. Together with p115/USO1 and GM130/GOLGA2, involved in vesicle tethering and fusion at the cis-Golgi membrane to maintain the stacked and inter-connected structure of the Golgi apparatus. Its function is as follows. Required for Golgi to endoplasmic reticulum retrogade transport, and for intra-Golgi transport. (Microbial infection) Required for the efficient production of infectious virion during human cytomegalovirus infection. Mechanistically, participates in the formation of the cytoplasmic viral assembly compartment where tegument acquisition and envelopment occur. This is Syntaxin-5 (STX5) from Homo sapiens (Human).